A 540-amino-acid polypeptide reads, in one-letter code: Sensory neuron membrane protein 1 (540 aa).

Over Met1–Pro105 the chain is Cytoplasmic. Residues Leu106–Val126 traverse the membrane as a helical segment. At Gln127–Asn436 the chain is on the extracellular side. N-linked (GlcNAc...) asparagine glycans are attached at residues Asn193 and Asn206. 3 disulfide bridges follow: Cys245-Cys310, Cys274-Cys330, and Cys312-Cys319. Asn418 is a glycosylation site (N-linked (GlcNAc...) asparagine). The chain crosses the membrane as a helical span at residues Thr437 to Met457. Topologically, residues His458–Tyr540 are cytoplasmic.

It belongs to the CD36 family.

It localises to the cell membrane. Functionally, plays an olfactory role that is not restricted to pheromone sensitivity. This is Sensory neuron membrane protein 1 from Aedes aegypti (Yellowfever mosquito).